We begin with the raw amino-acid sequence, 738 residues long: Polyribonucleotide nucleotidyltransferase (738 aa).

Mg(2+) contacts are provided by D514 and D520. The region spanning 580-639 (PRIITVKIPVDKIGEVIGPKGKMINQIQEDTGAEITIEDDGTIYIGAQVGSQAEAARATI) is the KH domain. The 73-residue stretch at 651-723 (GERYLGTVVK…SRGKLSLIPV (73 aa)) folds into the S1 motif domain.

It belongs to the polyribonucleotide nucleotidyltransferase family. Mg(2+) serves as cofactor.

The protein resides in the cytoplasm. It catalyses the reaction RNA(n+1) + phosphate = RNA(n) + a ribonucleoside 5'-diphosphate. Its function is as follows. Involved in mRNA degradation. Catalyzes the phosphorolysis of single-stranded polyribonucleotides processively in the 3'- to 5'-direction. This chain is Polyribonucleotide nucleotidyltransferase, found in Streptomyces avermitilis (strain ATCC 31267 / DSM 46492 / JCM 5070 / NBRC 14893 / NCIMB 12804 / NRRL 8165 / MA-4680).